The sequence spans 458 residues: Monomethylamine methyltransferase MtmB3 (458 aa).

Residue pyrrolysine 202 is a non-standard amino acid, pyrrolysine.

This sequence belongs to the monomethylamine methyltransferase family.

It catalyses the reaction Co(I)-[methylamine-specific corrinoid protein] + methylamine + H(+) = methyl-Co(III)-[methylamine-specific corrinoid protein] + NH4(+). It participates in one-carbon metabolism; methanogenesis from methylamine. In terms of biological role, catalyzes the transfer of the methyl group from monomethylamine to the corrinoid cofactor of MtmC. The protein is Monomethylamine methyltransferase MtmB3 (mtmB3) of Methanosarcina barkeri (strain Fusaro / DSM 804).